The chain runs to 274 residues: Dermonecrotic toxin SdSicTox-betaIIB2ii (274 aa).

His-5 is a catalytic residue. 2 residues coordinate Mg(2+): Glu-25 and Asp-27. Residue His-41 is the Nucleophile of the active site. Cystine bridges form between Cys-45-Cys-51 and Cys-47-Cys-190. Residue Asp-85 coordinates Mg(2+).

The protein belongs to the arthropod phospholipase D family. Class II subfamily. Mg(2+) serves as cofactor. In terms of tissue distribution, expressed by the venom gland.

Its subcellular location is the secreted. The catalysed reaction is an N-(acyl)-sphingosylphosphocholine = an N-(acyl)-sphingosyl-1,3-cyclic phosphate + choline. The enzyme catalyses an N-(acyl)-sphingosylphosphoethanolamine = an N-(acyl)-sphingosyl-1,3-cyclic phosphate + ethanolamine. It carries out the reaction a 1-acyl-sn-glycero-3-phosphocholine = a 1-acyl-sn-glycero-2,3-cyclic phosphate + choline. It catalyses the reaction a 1-acyl-sn-glycero-3-phosphoethanolamine = a 1-acyl-sn-glycero-2,3-cyclic phosphate + ethanolamine. In terms of biological role, dermonecrotic toxins cleave the phosphodiester linkage between the phosphate and headgroup of certain phospholipids (sphingolipid and lysolipid substrates), forming an alcohol (often choline) and a cyclic phosphate. This toxin acts on sphingomyelin (SM). It may also act on ceramide phosphoethanolamine (CPE), lysophosphatidylcholine (LPC) and lysophosphatidylethanolamine (LPE), but not on lysophosphatidylserine (LPS), and lysophosphatidylglycerol (LPG). It acts by transphosphatidylation, releasing exclusively cyclic phosphate products as second products. Induces dermonecrosis, hemolysis, increased vascular permeability, edema, inflammatory response, and platelet aggregation. The sequence is that of Dermonecrotic toxin SdSicTox-betaIIB2ii from Sicarius cf. damarensis (strain GJB-2008) (Six-eyed sand spider).